We begin with the raw amino-acid sequence, 445 residues long: Glutamate--tRNA ligase 1 (445 aa).

A 'HIGH' region motif is present at residues 9–19 (PSPTGYLHVGN). Residues 238–242 (KISKR) carry the 'KMSKS' region motif. An ATP-binding site is contributed by lysine 241.

It belongs to the class-I aminoacyl-tRNA synthetase family. Glutamate--tRNA ligase type 1 subfamily. Monomer.

The protein localises to the cytoplasm. It carries out the reaction tRNA(Glu) + L-glutamate + ATP = L-glutamyl-tRNA(Glu) + AMP + diphosphate. In terms of biological role, catalyzes the attachment of glutamate to tRNA(Glu) in a two-step reaction: glutamate is first activated by ATP to form Glu-AMP and then transferred to the acceptor end of tRNA(Glu). The protein is Glutamate--tRNA ligase 1 of Ehrlichia ruminantium (strain Gardel).